A 497-amino-acid chain; its full sequence is Actin-binding protein WASF2 (497 aa).

Disordered stretches follow at residues 173–203 (KEKR…KEEW) and 239–436 (ENVD…SDAR). The segment covering 252-263 (SDSASSPSPSFS) has biased composition (low complexity). 2 stretches are compositionally biased toward pro residues: residues 298–335 (SHPP…PPLP) and 343–403 (GTPP…PPLP). Positions 435 to 452 (ARSDLLSAIRQGFQLRRV) constitute a WH2 domain. A Phosphoserine modification is found at serine 473.

Belongs to the SCAR/WAVE family. In terms of assembly, binds actin and the Arp2/3 complex. Interacts with BAIAP2. Component of the WAVE2 complex composed of ABI1, CYFIP1/SRA1, NCKAP1/NAP1 (NCKAP1l/HEM1 in hematopoietic cells) and WASF2/WAVE2. Directly interacts with BRK1. Interacts with human cytomegalovirus protein UL135. Interacts with FNBP1L (via the SH3 domain).

The protein localises to the cytoplasm. The protein resides in the cytoskeleton. It localises to the cell projection. Its subcellular location is the lamellipodium. It is found in the basolateral cell membrane. Downstream effector molecule involved in the transmission of signals from tyrosine kinase receptors and small GTPases to the actin cytoskeleton. Promotes formation of actin filaments. Part of the WAVE complex that regulates lamellipodia formation. The WAVE complex regulates actin filament reorganization via its interaction with the Arp2/3 complex. This chain is Actin-binding protein WASF2, found in Mus musculus (Mouse).